We begin with the raw amino-acid sequence, 164 residues long: Outer membrane protein assembly factor BamE (164 aa).

Positions 1-19 (MHAFFPRLLLLLLFLPLTH) are cleaved as a signal peptide. The tract at residues 111–164 (PAFSESEPAQNFFSPEQTFTPAPDTDSNMNEEPDKKGTVNFLKENQTNFYKDNQ) is disordered. Polar residues-rich tracts occupy residues 117–140 (EPAQ…SNMN) and 153–164 (KENQTNFYKDNQ).

Belongs to the BamE family. As to quaternary structure, part of the Bam complex.

It localises to the cell outer membrane. Its function is as follows. Part of the outer membrane protein assembly complex, which is involved in assembly and insertion of beta-barrel proteins into the outer membrane. In Nitrosomonas europaea (strain ATCC 19718 / CIP 103999 / KCTC 2705 / NBRC 14298), this protein is Outer membrane protein assembly factor BamE.